An 869-amino-acid polypeptide reads, in one-letter code: DNA mismatch repair protein MutS (869 aa).

Residue 624–631 participates in ATP binding; that stretch reads GPNMGGKS.

It belongs to the DNA mismatch repair MutS family.

In terms of biological role, this protein is involved in the repair of mismatches in DNA. It is possible that it carries out the mismatch recognition step. This protein has a weak ATPase activity. The sequence is that of DNA mismatch repair protein MutS from Solibacter usitatus (strain Ellin6076).